We begin with the raw amino-acid sequence, 480 residues long: Proline--tRNA ligase (480 aa).

The protein belongs to the class-II aminoacyl-tRNA synthetase family. ProS type 3 subfamily. Homodimer.

It localises to the cytoplasm. It catalyses the reaction tRNA(Pro) + L-proline + ATP = L-prolyl-tRNA(Pro) + AMP + diphosphate. In terms of biological role, catalyzes the attachment of proline to tRNA(Pro) in a two-step reaction: proline is first activated by ATP to form Pro-AMP and then transferred to the acceptor end of tRNA(Pro). This Roseiflexus castenholzii (strain DSM 13941 / HLO8) protein is Proline--tRNA ligase.